Here is an 895-residue protein sequence, read N- to C-terminus: MSATEPTNEKVDKIVSDDEDEDIDQLVADLQSNPGAGDEEEEEENDSSFKAVPEELLQTDPRVGLTDDEVTKRRKRYGLNQMAEEQENLVLKFVMFFVGPIQFVMEAAAVLAAGLEDWVDFGVICALLLLNAFVGFIQEYQAGSIVDELKKTLANSALVVRNGQLVEIPANEVVPGDILQLEDGTVIPTDGRIVSEDCLLQVDQSAITGESLAVDKRSGDSCYSSSTVKTGEAFMIVTATGDSTFVGRAAALVNKASAGTGHFTEVLNGIGTTLLVFVIVTLLVVWVACFYRTVRIVPILRYTLAITIIGVPVGLPAVVTTTMAVGAAYLAKKQAIVQKLSAIESLAGVEILCSDKTGTLTKNKLSLHEPYTVEGVEPDDLMLTACLAASRKKKGLDAIDKAFLKSLINYPRAKAALPKYKVIEFQPFDPVSKKVTAIVESPEGERIICVKGAPLFVLKTVEDDHPIPEDVHENYQNTVAEFASRGFRSLGVARKRGEGHWEILGIMPCMDPPRDDTAATVNEARRLGLRVKMLTGDAVGIAKETCRQLGLGTNIYDADRLGLSGGGDMAGSEIADFVENADGFAEGFPTNKYNAVEILQSRGYLVAMTGDGVNDAPSLKKADTGIAVEGATDAARSAADIVFLAPGLSAIIDALKTSRQIFHRMYSYVVYRIALSLHLELFLGLWIAILNRSLDINLIVFIAIFADVATLAIAYDNAPYDPKPVKWNLPRLWGMSIVLGIILAIGTWITLTTMLLPKGGIIQNFGGLDGILFLQISLTENWLIFVTRAQGPFWSSIPSWQLSGAVLIVDIIATCFTLFGWWSQNWTDIVTVVRTWIWSFGVFCVMGGAYYLMSTSEAFDNFCNGRKPQQHTDKRSLEDFLVSMQRVSTQHEKST.

Residues 1-53 (MSATEPTNEKVDKIVSDDEDEDIDQLVADLQSNPGAGDEEEEEENDSSFKAVP) form a disordered region. The Cytoplasmic portion of the chain corresponds to 1-92 (MSATEPTNEK…AEEQENLVLK (92 aa)). The segment covering 7–16 (TNEKVDKIVS) has biased composition (basic and acidic residues). Positions 37–46 (GDEEEEEEND) are enriched in acidic residues. The chain crosses the membrane as a helical span at residues 93–113 (FVMFFVGPIQFVMEAAAVLAA). Over 114-117 (GLED) the chain is Extracellular. The helical transmembrane segment at 118 to 137 (WVDFGVICALLLLNAFVGFI) threads the bilayer. Topologically, residues 138–268 (QEYQAGSIVD…GTGHFTEVLN (131 aa)) are cytoplasmic. The helical transmembrane segment at 269–290 (GIGTTLLVFVIVTLLVVWVACF) threads the bilayer. Residues 291–301 (YRTVRIVPILR) lie on the Extracellular side of the membrane. A helical membrane pass occupies residues 302 to 324 (YTLAITIIGVPVGLPAVVTTTMA). Over 325-696 (VGAAYLAKKQ…IAILNRSLDI (372 aa)) the chain is Cytoplasmic. The active-site 4-aspartylphosphate intermediate is D355. D611 and D615 together coordinate Mg(2+). Residues 697–715 (NLIVFIAIFADVATLAIAY) traverse the membrane as a helical segment. At 716-731 (DNAPYDPKPVKWNLPR) the chain is on the extracellular side. The chain crosses the membrane as a helical span at residues 732–751 (LWGMSIVLGIILAIGTWITL). Residues 752–801 (TTMLLPKGGIIQNFGGLDGILFLQISLTENWLIFVTRAQGPFWSSIPSWQ) lie on the Cytoplasmic side of the membrane. Residues 802 to 822 (LSGAVLIVDIIATCFTLFGWW) traverse the membrane as a helical segment. The Extracellular segment spans residues 823–834 (SQNWTDIVTVVR). The helical transmembrane segment at 835–851 (TWIWSFGVFCVMGGAYY) threads the bilayer. The Cytoplasmic portion of the chain corresponds to 852–895 (LMSTSEAFDNFCNGRKPQQHTDKRSLEDFLVSMQRVSTQHEKST).

The protein belongs to the cation transport ATPase (P-type) (TC 3.A.3) family. Type IIIA subfamily.

It is found in the cell membrane. It catalyses the reaction ATP + H2O + H(+)(in) = ADP + phosphate + 2 H(+)(out). Its function is as follows. The plasma membrane ATPase of plants and fungi is a hydrogen ion pump. The proton gradient it generates drives the active transport of nutrients by H(+)-symport. The resulting external acidification and/or internal alkinization may mediate growth responses. The polypeptide is Plasma membrane ATPase 1 (PMA1) (Candida albicans (Yeast)).